A 402-amino-acid polypeptide reads, in one-letter code: B3 domain-containing protein Os01g0723500 (402 aa).

The segment at residues 18–121 (RPHFFKVLVG…RFTAMVFDRT (104 aa)) is a DNA-binding region (TF-B3 1). The segment at 126–203 (EDLMGGGGGD…VKNEEDADEL (78 aa)) is disordered. Positions 152–162 (DAARPKKDSVG) are enriched in basic and acidic residues. Residues 173-186 (SGGQPLQIVDSSWT) show a composition bias toward polar residues. Positions 289–381 (CVIRMSTMHV…EFRVHIFRVV (93 aa)) form a DNA-binding region, TF-B3 2.

It is found in the nucleus. This is B3 domain-containing protein Os01g0723500 from Oryza sativa subsp. japonica (Rice).